A 273-amino-acid chain; its full sequence is Dermonecrotic toxin LarSicTox-alphaIB1aiv (273 aa).

His-5 is a catalytic residue. 2 residues coordinate Mg(2+): Glu-25 and Asp-27. The active-site Nucleophile is the His-41. 2 disulfides stabilise this stretch: Cys-45/Cys-51 and Cys-47/Cys-190. Asp-85 contributes to the Mg(2+) binding site. The N-linked (GlcNAc...) asparagine glycan is linked to Asn-250.

Belongs to the arthropod phospholipase D family. Class II subfamily. Mg(2+) serves as cofactor. Expressed by the venom gland.

Its subcellular location is the secreted. It catalyses the reaction an N-(acyl)-sphingosylphosphocholine = an N-(acyl)-sphingosyl-1,3-cyclic phosphate + choline. The catalysed reaction is an N-(acyl)-sphingosylphosphoethanolamine = an N-(acyl)-sphingosyl-1,3-cyclic phosphate + ethanolamine. The enzyme catalyses a 1-acyl-sn-glycero-3-phosphocholine = a 1-acyl-sn-glycero-2,3-cyclic phosphate + choline. It carries out the reaction a 1-acyl-sn-glycero-3-phosphoethanolamine = a 1-acyl-sn-glycero-2,3-cyclic phosphate + ethanolamine. Functionally, dermonecrotic toxins cleave the phosphodiester linkage between the phosphate and headgroup of certain phospholipids (sphingolipid and lysolipid substrates), forming an alcohol (often choline) and a cyclic phosphate. This toxin acts on sphingomyelin (SM). It may also act on ceramide phosphoethanolamine (CPE), lysophosphatidylcholine (LPC) and lysophosphatidylethanolamine (LPE), but not on lysophosphatidylserine (LPS), and lysophosphatidylglycerol (LPG). It acts by transphosphatidylation, releasing exclusively cyclic phosphate products as second products. Induces dermonecrosis, hemolysis, increased vascular permeability, edema, inflammatory response, and platelet aggregation. In Loxosceles arizonica (Arizona brown spider), this protein is Dermonecrotic toxin LarSicTox-alphaIB1aiv.